The sequence spans 89 residues: Small ribosomal subunit protein uS15 (89 aa).

Belongs to the universal ribosomal protein uS15 family. As to quaternary structure, part of the 30S ribosomal subunit. Forms a bridge to the 50S subunit in the 70S ribosome, contacting the 23S rRNA.

Its function is as follows. One of the primary rRNA binding proteins, it binds directly to 16S rRNA where it helps nucleate assembly of the platform of the 30S subunit by binding and bridging several RNA helices of the 16S rRNA. In terms of biological role, forms an intersubunit bridge (bridge B4) with the 23S rRNA of the 50S subunit in the ribosome. The polypeptide is Small ribosomal subunit protein uS15 (Mycobacterium sp. (strain JLS)).